Here is a 293-residue protein sequence, read N- to C-terminus: Foldase protein PrsA 2 (293 aa).

The N-terminal stretch at 1–20 (MKKKLILGLVMMMALFSLAA) is a signal peptide. Cysteine 21 is lipidated: N-palmitoyl cysteine. Cysteine 21 carries the S-diacylglycerol cysteine lipid modification. The PpiC domain maps to 135-226 (QPDITVSHIL…YGYHIIQMDK (92 aa)).

This sequence belongs to the PrsA family.

Its subcellular location is the cell membrane. It catalyses the reaction [protein]-peptidylproline (omega=180) = [protein]-peptidylproline (omega=0). In terms of biological role, plays a major role in protein secretion by helping the post-translocational extracellular folding of several secreted proteins. This Listeria monocytogenes serovar 1/2a (strain ATCC BAA-679 / EGD-e) protein is Foldase protein PrsA 2 (prsA2).